A 198-amino-acid polypeptide reads, in one-letter code: ATP-dependent Clp protease proteolytic subunit (198 aa).

Catalysis depends on Ser-98, which acts as the Nucleophile. The active site involves His-123.

Belongs to the peptidase S14 family. As to quaternary structure, fourteen ClpP subunits assemble into 2 heptameric rings which stack back to back to give a disk-like structure with a central cavity, resembling the structure of eukaryotic proteasomes.

Its subcellular location is the cytoplasm. It carries out the reaction Hydrolysis of proteins to small peptides in the presence of ATP and magnesium. alpha-casein is the usual test substrate. In the absence of ATP, only oligopeptides shorter than five residues are hydrolyzed (such as succinyl-Leu-Tyr-|-NHMec, and Leu-Tyr-Leu-|-Tyr-Trp, in which cleavage of the -Tyr-|-Leu- and -Tyr-|-Trp bonds also occurs).. In terms of biological role, cleaves peptides in various proteins in a process that requires ATP hydrolysis. Has a chymotrypsin-like activity. Plays a major role in the degradation of misfolded proteins. This chain is ATP-dependent Clp protease proteolytic subunit, found in Listeria monocytogenes serovar 1/2a (strain ATCC BAA-679 / EGD-e).